Here is a 247-residue protein sequence, read N- to C-terminus: GTP cyclohydrolase 1 type 2 homolog (247 aa).

Residues H63, H64, D101, H215, and E219 each contribute to the a divalent metal cation site.

This sequence belongs to the GTP cyclohydrolase I type 2/NIF3 family. In terms of assembly, toroid-shaped homohexamer. In the hexamer, 3 dimers assemble to form a ring-like structure surrounding a central hole.

Provides significant protection from radiation damage and may be involved in the degradation of radiation-damaged nucleotides. In Escherichia coli O157:H7, this protein is GTP cyclohydrolase 1 type 2 homolog (ybgI).